A 453-amino-acid polypeptide reads, in one-letter code: Exodeoxyribonuclease 7 large subunit (453 aa).

It belongs to the XseA family. As to quaternary structure, heterooligomer composed of large and small subunits.

Its subcellular location is the cytoplasm. It catalyses the reaction Exonucleolytic cleavage in either 5'- to 3'- or 3'- to 5'-direction to yield nucleoside 5'-phosphates.. Bidirectionally degrades single-stranded DNA into large acid-insoluble oligonucleotides, which are then degraded further into small acid-soluble oligonucleotides. This Geobacter metallireducens (strain ATCC 53774 / DSM 7210 / GS-15) protein is Exodeoxyribonuclease 7 large subunit.